The sequence spans 383 residues: Interleukin-13 receptor subunit alpha-2 (383 aa).

An N-terminal signal peptide occupies residues 1-21 (MAFVHIRCLCFILLCTITGYS). Residues 22–334 (LEIKVNPPQD…WEGYTGPDSK (313 aa)) are Extracellular-facing. Fibronectin type-III domains lie at 28 to 128 (PPQD…SDEG), 131 to 219 (ETKI…PIRS), and 234 to 332 (PPEF…TGPD). Cys59 and Cys107 are oxidised to a cystine. An N-linked (GlcNAc...) asparagine glycan is attached at Asn109. A disulfide bond links Cys139 and Cys149. N-linked (GlcNAc...) asparagine glycosylation is present at Asn162. Residues Cys178 and Cys191 are joined by a disulfide bond. Asn209 and Asn293 each carry an N-linked (GlcNAc...) asparagine glycan. A disulfide bond links Cys263 and Cys310. Positions 316–320 (WSEWS) match the WSXWS motif motif. A helical membrane pass occupies residues 335–355 (IIFIVPVCLFFIFLLLLLCLI). Topologically, residues 356–383 (VEKEEPEPTLSLHVDLNKEVCAYEDTLC) are cytoplasmic.

It belongs to the type I cytokine receptor family. Type 5 subfamily. Interacts with IL4RA. Interacts with high affinity to interleukin-13 (IL13), but not to interleukin-4 (IL4). Cleaved by MMP8 leading to a soluble form that is also able to interact with IL13.

It is found in the cell membrane. The protein localises to the secreted. Cell surface receptor that plays a role in the regulation of IL-13-mediated responses. Functions as a decoy receptor that inhibits IL-13- and IL-4-mediated signal transduction via the JAK-STAT pathway and thereby modulates immune responses and inflammation. Serves as a functional signaling receptor for IL-13 in an alternative pathway involving AP-1 ultimately leading to the production of TGFB1. This chain is Interleukin-13 receptor subunit alpha-2 (Il13ra2), found in Mus musculus (Mouse).